The chain runs to 24 residues: Coenzyme PQQ synthesis protein A (24 aa).

Residues 16-20 (EVTMY) constitute a cross-link (pyrroloquinoline quinone (Glu-Tyr)).

This sequence belongs to the PqqA family.

It participates in cofactor biosynthesis; pyrroloquinoline quinone biosynthesis. In terms of biological role, required for coenzyme pyrroloquinoline quinone (PQQ) biosynthesis. PQQ is probably formed by cross-linking a specific glutamate to a specific tyrosine residue and excising these residues from the peptide. The sequence is that of Coenzyme PQQ synthesis protein A from Acinetobacter baumannii (strain SDF).